Reading from the N-terminus, the 326-residue chain is DNA-directed RNA polymerase subunit alpha (326 aa).

Positions 1-232 are alpha N-terminal domain (alpha-NTD); sequence MQGSARNFLK…EQLSSFVELE (232 aa). The segment at 246–326 is alpha C-terminal domain (alpha-CTD); it reads FDPQLLAAVD…NWPPVDLMSE (81 aa).

This sequence belongs to the RNA polymerase alpha chain family. In terms of assembly, homodimer. The RNAP catalytic core consists of 2 alpha, 1 beta, 1 beta' and 1 omega subunit. When a sigma factor is associated with the core the holoenzyme is formed, which can initiate transcription.

The enzyme catalyses RNA(n) + a ribonucleoside 5'-triphosphate = RNA(n+1) + diphosphate. In terms of biological role, DNA-dependent RNA polymerase catalyzes the transcription of DNA into RNA using the four ribonucleoside triphosphates as substrates. The sequence is that of DNA-directed RNA polymerase subunit alpha from Ruthia magnifica subsp. Calyptogena magnifica.